Reading from the N-terminus, the 761-residue chain is Cytoplasmic export protein 1 (761 aa).

HEAT repeat units follow at residues Ile385–Glu423 and Asn498–Leu534. Disordered stretches follow at residues Asp660–Ser692 and Ser714–Trp761. Polar residues-rich tracts occupy residues Pro680–Ser692 and Ser714–Gly737. Positions Gly747–Trp761 are enriched in acidic residues. Ser754 is subject to Phosphoserine.

Associates with the nuclear pore complex (NPC). Interacts with GSP1, LOS1, MSN5, NUP116 and TEF2.

It localises to the cytoplasm. Functionally, component of the nuclear tRNA export machinery that my collect tRNA from the nuclear tRNA export receptors of the aminoacylation-dependent export and may deliver aminoacylated tRNAs to the translation machinery pathway at the nuclear pore complex. This is Cytoplasmic export protein 1 (CEX1) from Saccharomyces cerevisiae (strain ATCC 204508 / S288c) (Baker's yeast).